Reading from the N-terminus, the 171-residue chain is Dual-action ribosomal maturation protein DarP (171 aa).

The segment at 1–30 is disordered; that stretch reads MPKRPAENPEQSDDFVSKSQKKREMAERQE.

Belongs to the DarP family.

It is found in the cytoplasm. Its function is as follows. Member of a network of 50S ribosomal subunit biogenesis factors which assembles along the 30S-50S interface, preventing incorrect 23S rRNA structures from forming. Promotes peptidyl transferase center (PTC) maturation. This is Dual-action ribosomal maturation protein DarP from Idiomarina loihiensis (strain ATCC BAA-735 / DSM 15497 / L2-TR).